The sequence spans 449 residues: Heterogeneous nuclear ribonucleoprotein H (449 aa).

Methionine 1 bears the N-acetylmethionine mark. An N-acetylmethionine; in Heterogeneous nuclear ribonucleoprotein H, N-terminally processed modification is found at methionine 2. Residues 11–90 enclose the RRM 1 domain; that stretch reads FVVKVRGLPW…RYVEVFKSNN (80 aa). Serine 23 bears the Phosphoserine mark. A Glycyl lysine isopeptide (Lys-Gly) (interchain with G-Cter in SUMO2) cross-link involves residue lysine 35. Phosphoserine is present on residues serine 54 and serine 63. Glycyl lysine isopeptide (Lys-Gly) (interchain with G-Cter in SUMO2) cross-links involve residues lysine 87 and lysine 98. The RRM 2 domain occupies 111–188; that stretch reads GFVRLRGLPF…RYIEIFKSSR (78 aa). Position 233 is a dimethylated arginine; alternate (arginine 233). Residue arginine 233 is modified to Omega-N-methylarginine; alternate. Residues 234–249 form a 1-1 repeat; that stretch reads GAYGGGYGGYDDYNGY. A 2 X 16 AA Gly-rich approximate repeats region spans residues 234–433; the sequence is GAYGGGYGGY…YGGQSSMSGY (200 aa). A Phosphotyrosine modification is found at tyrosine 246. In terms of domain architecture, RRM 3 spans 289–364; that stretch reads HCVHMRGLPY…RYVELFLNST (76 aa). Serine 310 is subject to Phosphoserine. Repeat copies occupy residues 354 to 372, 374 to 392, and 418 to 433. The tract at residues 354-392 is 2 X 19 AA perfect repeats; it reads HRYVELFLNSTAGASGGAYEHRYVELFLNSTAGASGGAY.

Part of a ternary complex containing FUBP2, PTBP1, PTBP2 and HNRNPH1. Identified in the spliceosome C complex. Interacts with IGF2BP1. Interacts with CUGBP1; the interaction is RNA-dependent. Interacts with MBNL1; the interaction in RNA-independent.

Its subcellular location is the nucleus. The protein resides in the nucleoplasm. Its function is as follows. This protein is a component of the heterogeneous nuclear ribonucleoprotein (hnRNP) complexes which provide the substrate for the processing events that pre-mRNAs undergo before becoming functional, translatable mRNAs in the cytoplasm. Mediates pre-mRNA alternative splicing regulation. Inhibits, together with CUGBP1, insulin receptor (IR) pre-mRNA exon 11 inclusion in myoblast. Binds to the IR RNA. Binds poly(RG). The chain is Heterogeneous nuclear ribonucleoprotein H (Hnrnph1) from Rattus norvegicus (Rat).